The following is a 38-amino-acid chain: Glucagon-like peptide (38 aa).

It belongs to the glucagon family.

It is found in the secreted. In Hydrolagus colliei (Spotted ratfish), this protein is Glucagon-like peptide.